Here is a 93-residue protein sequence, read N- to C-terminus: Small ribosomal subunit protein uS19 (93 aa).

This sequence belongs to the universal ribosomal protein uS19 family.

Functionally, protein S19 forms a complex with S13 that binds strongly to the 16S ribosomal RNA. This chain is Small ribosomal subunit protein uS19, found in Nocardia farcinica (strain IFM 10152).